A 750-amino-acid polypeptide reads, in one-letter code: Methylmalonyl-CoA mutase, mitochondrial (750 aa).

Residues 1-32 (MLRVKNQLFLLSPHYLKQVKESSGSRLIRQRF) constitute a mitochondrion transit peptide. Gln50 provides a ligand contact to malonyl-CoA. Position 89 is an N6-acetyllysine (Lys89). Malonyl-CoA is bound by residues 96–99 (YPTM) and 106–110 (TIRQY). Lys212 is subject to N6-acetyllysine. Residues 216 to 218 (TIQ), Arg228, Lys255, His265, and 304 to 306 (RLS) each bind malonyl-CoA. N6-acetyllysine is present on Lys335. At Lys343 the chain carries N6-succinyllysine. Phosphoserine is present on Ser481. Position 595 is an N6-succinyllysine (Lys595). N6-acetyllysine is present on Lys602. The 133-residue stretch at 614–746 (RPRLLVAKMG…DDIEKCLEKK (133 aa)) folds into the B12-binding domain. His627 serves as a coordination point for adenosylcob(III)alamin.

Belongs to the methylmalonyl-CoA mutase family. As to quaternary structure, homodimer. Interacts (the apoenzyme form) with MMAA; the interaction is GTP dependent. It depends on adenosylcob(III)alamin as a cofactor.

Its subcellular location is the mitochondrion matrix. The protein localises to the mitochondrion. It is found in the cytoplasm. The catalysed reaction is (R)-methylmalonyl-CoA = succinyl-CoA. Its activity is regulated as follows. Inhibited by itaconyl-CoA, a metabolite that inactivates the coenzyme B12 cofactor. Catalyzes the reversible isomerization of methylmalonyl-CoA (MMCoA) (generated from branched-chain amino acid metabolism and degradation of dietary odd chain fatty acids and cholesterol) to succinyl-CoA (3-carboxypropionyl-CoA), a key intermediate of the tricarboxylic acid cycle. This is Methylmalonyl-CoA mutase, mitochondrial (MMUT) from Macaca fascicularis (Crab-eating macaque).